We begin with the raw amino-acid sequence, 376 residues long: Cyclic GMP-AMP synthase-like receptor 1 (376 aa).

Mg(2+) is bound by residues Glu77 and Asp79.

Belongs to the mab-21 family. It depends on Mg(2+) as a cofactor. The cofactor is Mn(2+).

The enzyme catalyses UTP + ATP = 3',3'-cUAMP + 2 diphosphate. Functionally, nucleotidyltransferase that catalyzes the formation of cyclic UMP-AMP (3',3'-cUAMP) from ATP and UTP and plays a key role in innate immunity. Acts as a key sensor of double-stranded RNA (dsRNA), the presence of dsRNA in the cytoplasm being a danger signal that triggers the immune responses. Directly binds dsRNA, activating the nucleotidyltransferase activity, leading to synthesis of 3',3'-cUAMP, a second messenger that binds to and activates Sting, thereby triggering the immune response via activation of the NF-kappa-B transcription factor. The protein is Cyclic GMP-AMP synthase-like receptor 1 of Stylophora pistillata (Smooth cauliflower coral).